A 311-amino-acid chain; its full sequence is Glycerol-3-phosphate dehydrogenase [NAD(P)+] (311 aa).

Positions 11, 30, 31, and 95 each coordinate NADPH. 3 residues coordinate sn-glycerol 3-phosphate: K95, G123, and S125. A127 contributes to the NADPH binding site. The sn-glycerol 3-phosphate site is built by K177, D230, S240, R241, and N242. The active-site Proton acceptor is the K177. Position 241 (R241) interacts with NADPH. V265 and E267 together coordinate NADPH.

The protein belongs to the NAD-dependent glycerol-3-phosphate dehydrogenase family.

It localises to the cytoplasm. The enzyme catalyses sn-glycerol 3-phosphate + NAD(+) = dihydroxyacetone phosphate + NADH + H(+). It catalyses the reaction sn-glycerol 3-phosphate + NADP(+) = dihydroxyacetone phosphate + NADPH + H(+). It functions in the pathway membrane lipid metabolism; glycerophospholipid metabolism. Its function is as follows. Catalyzes the reduction of the glycolytic intermediate dihydroxyacetone phosphate (DHAP) to sn-glycerol 3-phosphate (G3P), the key precursor for phospholipid synthesis. This Bartonella bacilliformis (strain ATCC 35685 / KC583 / Herrer 020/F12,63) protein is Glycerol-3-phosphate dehydrogenase [NAD(P)+].